Reading from the N-terminus, the 428-residue chain is 26S proteasome regulatory subunit 6B homolog (428 aa).

Position 1 is an N-acetylmethionine (Met-1). 213-220 (GPPGTGKT) serves as a coordination point for ATP. Lys-280 participates in a covalent cross-link: Glycyl lysine isopeptide (Lys-Gly) (interchain with G-Cter in ubiquitin).

This sequence belongs to the AAA ATPase family. In terms of processing, N-acetylated by NAT3.

It localises to the cytoplasm. Its subcellular location is the nucleus. Functionally, the 26S proteasome is involved in the ATP-dependent degradation of ubiquitinated proteins. The regulatory (or ATPase) complex confers ATP dependency and substrate specificity to the 26S complex. This chain is 26S proteasome regulatory subunit 6B homolog (RPT3), found in Saccharomyces cerevisiae (strain ATCC 204508 / S288c) (Baker's yeast).